A 109-amino-acid chain; its full sequence is ATP-dependent Clp protease adapter protein ClpS (109 aa).

The protein belongs to the ClpS family. Binds to the N-terminal domain of the chaperone ClpA.

In terms of biological role, involved in the modulation of the specificity of the ClpAP-mediated ATP-dependent protein degradation. This is ATP-dependent Clp protease adapter protein ClpS from Lawsonia intracellularis (strain PHE/MN1-00).